The chain runs to 388 residues: Succinate--CoA ligase [ADP-forming] subunit beta (388 aa).

Residues 9-244 (KALFAEYGLP…PSQDDAREAH (236 aa)) form the ATP-grasp domain. Residues Lys-46, 53 to 55 (GRG), Glu-99, Thr-102, and Glu-107 each bind ATP. Mg(2+) contacts are provided by Asn-199 and Asp-213. Substrate-binding positions include Asn-264 and 321 to 323 (GIV).

This sequence belongs to the succinate/malate CoA ligase beta subunit family. Heterotetramer of two alpha and two beta subunits. The cofactor is Mg(2+).

The enzyme catalyses succinate + ATP + CoA = succinyl-CoA + ADP + phosphate. It carries out the reaction GTP + succinate + CoA = succinyl-CoA + GDP + phosphate. It functions in the pathway carbohydrate metabolism; tricarboxylic acid cycle; succinate from succinyl-CoA (ligase route): step 1/1. Functionally, succinyl-CoA synthetase functions in the citric acid cycle (TCA), coupling the hydrolysis of succinyl-CoA to the synthesis of either ATP or GTP and thus represents the only step of substrate-level phosphorylation in the TCA. The beta subunit provides nucleotide specificity of the enzyme and binds the substrate succinate, while the binding sites for coenzyme A and phosphate are found in the alpha subunit. This is Succinate--CoA ligase [ADP-forming] subunit beta from Shewanella pealeana (strain ATCC 700345 / ANG-SQ1).